We begin with the raw amino-acid sequence, 253 residues long: Vitamin B12 import ATP-binding protein BtuD (253 aa).

Residues 1–236 (MTNQLMALNQ…NTLSRVFAAD (236 aa)) enclose the ABC transporter domain. 34–41 (GPNGSGKS) contributes to the ATP binding site.

It belongs to the ABC transporter superfamily. Vitamin B12 importer (TC 3.A.1.13.1) family. As to quaternary structure, the complex is composed of two ATP-binding proteins (BtuD), two transmembrane proteins (BtuC) and a solute-binding protein (BtuF).

The protein localises to the cell inner membrane. The catalysed reaction is an R-cob(III)alamin(out) + ATP + H2O = an R-cob(III)alamin(in) + ADP + phosphate + H(+). In terms of biological role, part of the ABC transporter complex BtuCDF involved in vitamin B12 import. Responsible for energy coupling to the transport system. In Photorhabdus laumondii subsp. laumondii (strain DSM 15139 / CIP 105565 / TT01) (Photorhabdus luminescens subsp. laumondii), this protein is Vitamin B12 import ATP-binding protein BtuD.